A 485-amino-acid chain; its full sequence is Amidophosphoribosyltransferase, chloroplastic (485 aa).

A chloroplast-targeting transit peptide spans 1-18 (KTTNTFASVNDDEKPREE). Cysteine 19 (nucleophile) is an active-site residue. One can recognise a Glutamine amidotransferase type-2 domain in the interval 19–237 (CGVVGIYGDP…PGEVVVVDHT (219 aa)). A [4Fe-4S] cluster-binding site is contributed by cysteine 253. Mg(2+)-binding residues include serine 300, aspartate 362, and aspartate 363. The [4Fe-4S] cluster site is built by cysteine 399, cysteine 450, and cysteine 453.

It in the C-terminal section; belongs to the purine/pyrimidine phosphoribosyltransferase family. The cofactor is Mg(2+). [4Fe-4S] cluster is required as a cofactor.

It is found in the plastid. Its subcellular location is the chloroplast. It catalyses the reaction 5-phospho-beta-D-ribosylamine + L-glutamate + diphosphate = 5-phospho-alpha-D-ribose 1-diphosphate + L-glutamine + H2O. It functions in the pathway purine metabolism; IMP biosynthesis via de novo pathway; N(1)-(5-phospho-D-ribosyl)glycinamide from 5-phospho-alpha-D-ribose 1-diphosphate: step 1/2. The chain is Amidophosphoribosyltransferase, chloroplastic (PUR1) from Vigna aconitifolia (Moth bean).